Consider the following 129-residue polypeptide: MPFDLDSLKYNEAGLVPAIVQDAGTGAVLMMAYMNREALEKTLATGETWFWSRSRKAFWHKGETSGNVQRVKEVLYDCDRDTLLVKVEQHGAACHEGYYSCFHYRLERDGSVTVVGEKQFDPEQVYGKR.

Residue Asp77 coordinates Mg(2+). Cys78 is a binding site for Zn(2+). The Mg(2+) site is built by Asp79 and Asp81. 2 residues coordinate Zn(2+): Cys94 and Cys101.

It belongs to the PRA-CH family. As to quaternary structure, homodimer. Mg(2+) is required as a cofactor. Zn(2+) serves as cofactor.

The protein localises to the cytoplasm. It catalyses the reaction 1-(5-phospho-beta-D-ribosyl)-5'-AMP + H2O = 1-(5-phospho-beta-D-ribosyl)-5-[(5-phospho-beta-D-ribosylamino)methylideneamino]imidazole-4-carboxamide. It participates in amino-acid biosynthesis; L-histidine biosynthesis; L-histidine from 5-phospho-alpha-D-ribose 1-diphosphate: step 3/9. Catalyzes the hydrolysis of the adenine ring of phosphoribosyl-AMP. In Pelotomaculum thermopropionicum (strain DSM 13744 / JCM 10971 / SI), this protein is Phosphoribosyl-AMP cyclohydrolase.